A 785-amino-acid polypeptide reads, in one-letter code: Endonuclease MutS2 (785 aa).

332–339 contributes to the ATP binding site; the sequence is GPNTGGKT. One can recognise a Smr domain in the interval 710–785; sequence IDLRGLDAEE…GDGATIVELK (76 aa).

The protein belongs to the DNA mismatch repair MutS family. MutS2 subfamily. Homodimer. Binds to stalled ribosomes, contacting rRNA.

Functionally, endonuclease that is involved in the suppression of homologous recombination and thus may have a key role in the control of bacterial genetic diversity. In terms of biological role, acts as a ribosome collision sensor, splitting the ribosome into its 2 subunits. Detects stalled/collided 70S ribosomes which it binds and splits by an ATP-hydrolysis driven conformational change. Acts upstream of the ribosome quality control system (RQC), a ribosome-associated complex that mediates the extraction of incompletely synthesized nascent chains from stalled ribosomes and their subsequent degradation. Probably generates substrates for RQC. This chain is Endonuclease MutS2, found in Clostridium botulinum (strain Alaska E43 / Type E3).